Consider the following 625-residue polypeptide: Alpha-amylase 1 (625 aa).

The N-terminal stretch at 1 to 22 is a signal peptide; the sequence is MGFSKIALFSLFALFGLPTSLA. A disulfide bridge connects residues Cys51 and Cys59. Trp105 is a substrate binding site. A Ca(2+)-binding site is contributed by Asn143. Residues Asn153, Asn163, and Asn180 are each glycosylated (N-linked (GlcNAc...) asparagine). Cys172 and Cys187 form a disulfide bridge. Positions 185 and 198 each coordinate Ca(2+). Position 227 (Arg227) interacts with substrate. Asp229 is a Ca(2+) binding site. Asp229 acts as the Nucleophile in catalysis. Substrate is bound at residue 232 to 233; the sequence is KQ. N-linked (GlcNAc...) asparagine glycosylation is present at Asn241. A Ca(2+)-binding site is contributed by Glu253. Glu253 (proton donor) is an active-site residue. Asn260 and Asn286 each carry an N-linked (GlcNAc...) asparagine glycan. A disulfide bond links Cys263 and Cys306. Asp322 is a substrate binding site. Asn331 carries an N-linked (GlcNAc...) asparagine glycan. Arg370 provides a ligand contact to substrate. Asn440 and Asn461 each carry an N-linked (GlcNAc...) asparagine glycan. Positions 526–579 are disordered; it reads SATSSSKSSSSSSSRSGSSSSSSSRSGSTSSSGSSHTITSTSQSVHTSGSSTST. Ser603 carries the GPI-anchor amidated serine lipid modification. Residues 604–625 constitute a propeptide, removed in mature form; it reads SANAVRVSILGVAAFIAIVLFI.

The protein belongs to the glycosyl hydrolase 13 family. Ca(2+) is required as a cofactor.

The protein localises to the cell membrane. The enzyme catalyses Endohydrolysis of (1-&gt;4)-alpha-D-glucosidic linkages in polysaccharides containing three or more (1-&gt;4)-alpha-linked D-glucose units.. The polypeptide is Alpha-amylase 1 (aah1) (Schizosaccharomyces pombe (strain 972 / ATCC 24843) (Fission yeast)).